The chain runs to 67 residues: Conotoxin Cl14.2b (67 aa).

A signal peptide spans 1–20 (MNVTVMFLVLLLLTMPLTDG). A propeptide spanning residues 21–48 (FNIRATNGGELFGPVQRDAGNVLDHGFQ) is cleaved from the precursor.

Belongs to the conotoxin L superfamily. Post-translationally, contains 2 disulfide bonds. Expressed by the venom duct.

It is found in the secreted. Its function is as follows. Increases calcium current amplitude through Cav1.2/Cav1.3 channels in rat pancreatic beta-cells, which is a prerequisite for eliciting insulin secretion. Stimulates insulin secretion in NIT-1 insulinoma cell lines. In vivo, significantly decreases mice blood glucose levels as of 45 minutes after treatment, similarly to insulin treatment. Has a potential therapeutic use in endocrinal pathologies such as early stages of type 2 diabetes where the pancreas's capability to produce insulin is still effective. This is Conotoxin Cl14.2b from Californiconus californicus (California cone).